The following is an 85-amino-acid chain: Coiled-coil-helix-coiled-coil-helix domain-containing protein 7 (85 aa).

The CHCH domain maps to 13–55 (INPCLSESDASTRCLDENNYDRERCSTYFLRYKNCRRFWNSIV). Short sequence motifs (cx9C motif) lie at residues 16-26 (CLSESDASTRC) and 37-47 (CSTYFLRYKNC). 2 disulfides stabilise this stretch: C16–C47 and C26–C37.

It belongs to the CHCHD7 family. In terms of assembly, monomer.

The protein resides in the mitochondrion intermembrane space. This is Coiled-coil-helix-coiled-coil-helix domain-containing protein 7 (CHCHD7) from Homo sapiens (Human).